Reading from the N-terminus, the 378-residue chain is Ribosomal RNA large subunit methyltransferase G (378 aa).

Belongs to the methyltransferase superfamily. RlmG family.

The protein localises to the cytoplasm. It catalyses the reaction guanosine(1835) in 23S rRNA + S-adenosyl-L-methionine = N(2)-methylguanosine(1835) in 23S rRNA + S-adenosyl-L-homocysteine + H(+). Functionally, specifically methylates the guanine in position 1835 (m2G1835) of 23S rRNA. This Shewanella baltica (strain OS155 / ATCC BAA-1091) protein is Ribosomal RNA large subunit methyltransferase G.